We begin with the raw amino-acid sequence, 842 residues long: Protein P (842 aa).

Positions 1–177 (MPLSYQHFRR…FCGSPYSWEQ (177 aa)) are terminal protein domain (TP). Positions 178-345 (ELHHGAFLDG…YCLTHLVNLL (168 aa)) are spacer. The disordered stretch occupies residues 205–271 (SRPPVGSSIQ…RHAKNIASRP (67 aa)). The segment covering 223 to 239 (GPQSQQRPLDGSQQGRS) has biased composition (polar residues). A polymerase/reverse transcriptase domain (RT) region spans residues 346–689 (EDWGPCTEHG…YLNLYPVARQ (344 aa)). The Reverse transcriptase domain maps to 356 to 599 (KHHIRIPRTP…YSLNFMGYVI (244 aa)). 3 residues coordinate Mg(2+): Asp-428, Asp-550, and Asp-551.

This sequence belongs to the hepadnaviridae P protein family.

The enzyme catalyses DNA(n) + a 2'-deoxyribonucleoside 5'-triphosphate = DNA(n+1) + diphosphate. It carries out the reaction Endonucleolytic cleavage to 5'-phosphomonoester.. Activated by host HSP70 and HSP40 in vitro to be able to bind the epsilon loop of the pgRNA. Because deletion of the RNase H region renders the protein partly chaperone-independent, the chaperones may be needed indirectly to relieve occlusion of the RNA-binding site by this domain. Inhibited by several reverse-transcriptase inhibitors: Lamivudine, Adefovir and Entecavir. Multifunctional enzyme that converts the viral RNA genome into dsDNA in viral cytoplasmic capsids. This enzyme displays a DNA polymerase activity that can copy either DNA or RNA templates, and a ribonuclease H (RNase H) activity that cleaves the RNA strand of RNA-DNA heteroduplexes in a partially processive 3'- to 5'-endonucleasic mode. Neo-synthesized pregenomic RNA (pgRNA) are encapsidated together with the P protein, and reverse-transcribed inside the nucleocapsid. Initiation of reverse-transcription occurs first by binding the epsilon loop on the pgRNA genome, and is initiated by protein priming, thereby the 5'-end of (-)DNA is covalently linked to P protein. Partial (+)DNA is synthesized from the (-)DNA template and generates the relaxed circular DNA (RC-DNA) genome. After budding and infection, the RC-DNA migrates in the nucleus, and is converted into a plasmid-like covalently closed circular DNA (cccDNA). The activity of P protein does not seem to be necessary for cccDNA generation, and is presumably released from (+)DNA by host nuclear DNA repair machinery. The protein is Protein P of Hepatitis B virus genotype E subtype ayw4 (isolate Kou) (HBV-E).